Here is a 247-residue protein sequence, read N- to C-terminus: Sulfate transporter CysZ (247 aa).

The next 5 membrane-spanning stretches (helical) occupy residues 29-49, 66-86, 141-160, 164-186, and 212-232; these read FVVL…FYLF, FLSW…LATF, LLYI…IPAL, VGPV…DYPF, and VLVS…PVAI.

Belongs to the CysZ family.

The protein resides in the cell inner membrane. In terms of biological role, high affinity, high specificity proton-dependent sulfate transporter, which mediates sulfate uptake. Provides the sulfur source for the cysteine synthesis pathway. The sequence is that of Sulfate transporter CysZ from Vibrio parahaemolyticus serotype O3:K6 (strain RIMD 2210633).